Here is a 336-residue protein sequence, read N- to C-terminus: Ketol-acid reductoisomerase (NADP(+)) 1 (336 aa).

The KARI N-terminal Rossmann domain occupies 2–181 (AKVYYEKDVT…GATRAGVLET (180 aa)). NADP(+) contacts are provided by residues 25 to 28 (YGSQ), Arg48, Ser52, and 82 to 85 (DELQ). The active site involves His107. Residue Gly133 participates in NADP(+) binding. Positions 182–327 (TFKEETETDL…RKLREMMPFV (146 aa)) constitute a KARI C-terminal knotted domain. Mg(2+) is bound by residues Asp190, Glu194, Glu226, and Glu230. Substrate is bound at residue Ser251.

Belongs to the ketol-acid reductoisomerase family. Mg(2+) serves as cofactor.

The catalysed reaction is (2R)-2,3-dihydroxy-3-methylbutanoate + NADP(+) = (2S)-2-acetolactate + NADPH + H(+). It carries out the reaction (2R,3R)-2,3-dihydroxy-3-methylpentanoate + NADP(+) = (S)-2-ethyl-2-hydroxy-3-oxobutanoate + NADPH + H(+). It functions in the pathway amino-acid biosynthesis; L-isoleucine biosynthesis; L-isoleucine from 2-oxobutanoate: step 2/4. It participates in amino-acid biosynthesis; L-valine biosynthesis; L-valine from pyruvate: step 2/4. Its function is as follows. Involved in the biosynthesis of branched-chain amino acids (BCAA). Catalyzes an alkyl-migration followed by a ketol-acid reduction of (S)-2-acetolactate (S2AL) to yield (R)-2,3-dihydroxy-isovalerate. In the isomerase reaction, S2AL is rearranged via a Mg-dependent methyl migration to produce 3-hydroxy-3-methyl-2-ketobutyrate (HMKB). In the reductase reaction, this 2-ketoacid undergoes a metal-dependent reduction by NADPH to yield (R)-2,3-dihydroxy-isovalerate. The sequence is that of Ketol-acid reductoisomerase (NADP(+)) 1 from Bacillus cereus (strain ATCC 14579 / DSM 31 / CCUG 7414 / JCM 2152 / NBRC 15305 / NCIMB 9373 / NCTC 2599 / NRRL B-3711).